A 399-amino-acid chain; its full sequence is Succinate--CoA ligase [ADP-forming] subunit beta (399 aa).

Positions 9–254 constitute an ATP-grasp domain; the sequence is KELLAKYGIG…ETEEDPAEVE (246 aa). Residues Lys-46, 53-55, Val-112, and Glu-117 each bind ATP; that span reads GRG. The Mg(2+) site is built by Asn-209 and Asp-223. Residues Asn-274 and 331 to 333 each bind substrate; that span reads GIM.

The protein belongs to the succinate/malate CoA ligase beta subunit family. In terms of assembly, heterotetramer of two alpha and two beta subunits. Requires Mg(2+) as cofactor.

It carries out the reaction succinate + ATP + CoA = succinyl-CoA + ADP + phosphate. The enzyme catalyses GTP + succinate + CoA = succinyl-CoA + GDP + phosphate. Its pathway is carbohydrate metabolism; tricarboxylic acid cycle; succinate from succinyl-CoA (ligase route): step 1/1. Functionally, succinyl-CoA synthetase functions in the citric acid cycle (TCA), coupling the hydrolysis of succinyl-CoA to the synthesis of either ATP or GTP and thus represents the only step of substrate-level phosphorylation in the TCA. The beta subunit provides nucleotide specificity of the enzyme and binds the substrate succinate, while the binding sites for coenzyme A and phosphate are found in the alpha subunit. The chain is Succinate--CoA ligase [ADP-forming] subunit beta from Erythrobacter litoralis (strain HTCC2594).